We begin with the raw amino-acid sequence, 174 residues long: Auxin-responsive protein IAA2 (174 aa).

Residues 16–20 (LCLGL) carry the EAR-like (transcriptional repression) motif. Positions 44–67 (FEETRDEEESTPPTKTQIVGWPPV) are disordered. The region spanning 77–164 (VSYVKVSMDG…SCKRLRIMKG (88 aa)) is the PB1 domain.

The protein belongs to the Aux/IAA family. Homodimers and heterodimers. Interacts with the auxin-responsive protein IAA1. Interacts with TPL. As to expression, preferentially expressed in vegetative organs.

It is found in the nucleus. In terms of biological role, aux/IAA proteins are short-lived transcriptional factors that function as repressors of early auxin response genes at low auxin concentrations. Repression is thought to result from the interaction with auxin response factors (ARFs), proteins that bind to the auxin-responsive promoter element (AuxRE). Formation of heterodimers with ARF proteins may alter their ability to modulate early auxin response genes expression. The chain is Auxin-responsive protein IAA2 (IAA2) from Arabidopsis thaliana (Mouse-ear cress).